Here is a 523-residue protein sequence, read N- to C-terminus: Cytidine and dCMP deaminase domain-containing protein 1 (523 aa).

The segment covering 1 to 11 has biased composition (polar residues); the sequence is MKETDQMQSLE. Disordered stretches follow at residues 1–27 and 55–81; these read MKET…GSMT and QGQK…RVST. One can recognise a CMP/dCMP-type deaminase 1 domain in the interval 71-169; that stretch reads GDNEELTRVS…SLLTEASSSE (99 aa). 3 residues coordinate Zn(2+): histidine 110, cysteine 135, and cysteine 138. Residues 272-284 carry the Nuclear export signal motif; that stretch reads NLRQNMKDLILLL. The 166-residue stretch at 318–483 folds into the CMP/dCMP-type deaminase 2 domain; the sequence is EVARHCMVQA…LNPSEAYSLD (166 aa). Histidine 399 serves as a coordination point for Zn(2+). The active-site Proton donor is the glutamate 401. Cysteine 427 and cysteine 430 together coordinate Zn(2+). A disordered region spans residues 478-523; sequence EAYSLDPNEPERRENGVLRRRSAKDEQRSSKRPRLETRSAGRATLQ. Residues 486 to 516 are compositionally biased toward basic and acidic residues; that stretch reads EPERRENGVLRRRSAKDEQRSSKRPRLETRS. The Bipartite nuclear localization signal motif lies at 489 to 511; that stretch reads RRENGVLRRRSAKDEQRSSKRPR.

Belongs to the cytidine and deoxycytidylate deaminase family. It depends on Zn(2+) as a cofactor.

The protein resides in the cytoplasm. It is found in the nucleus. The enzyme catalyses 2'-deoxycytidine + H2O + H(+) = 2'-deoxyuridine + NH4(+). It catalyses the reaction cytidine + H2O + H(+) = uridine + NH4(+). Its function is as follows. Catalyzes the deamination of cytidine and deoxycytidine into uridine and deoxyuridine, respectively. May play an important role in testicular development and spermatogenesis. In Mus musculus (Mouse), this protein is Cytidine and dCMP deaminase domain-containing protein 1 (Cdadc1).